The sequence spans 335 residues: Transcription factor E2F5 (335 aa).

Positions 1 to 18 (MAAAEPTSSAQPTPQAQA) are enriched in low complexity. A disordered region spans residues 1 to 40 (MAAAEPTSSAQPTPQAQAQPPPHGAPSSQPSAALAGGSSR). The DNA-binding element occupies 37–108 (GSSRHEKSLG…KNSIQWKGVG (72 aa)). Residues 66–88 (LKAAADTLAVRQKRRIYDITNVL) are leucine-zipper. The DEF box signature appears at 71–108 (DTLAVRQKRRIYDITNVLEGIDLIEKKSKNSIQWKGVG). The dimerization stretch occupies residues 109-205 (AGCNTKEVID…GQNGQKKYQI (97 aa)). Residues 226–285 (SKPVVFPVPPPDDLTQPSSQSSTSVTPQKSTMAAQNLPEQHVSERSQTFQQTPAAEVSSG) are disordered. The segment covering 238 to 256 (DLTQPSSQSSTSVTPQKST) has biased composition (low complexity). The tract at residues 277-335 (TPAAEVSSGSISGDIIDELMSSDVFPLLRLSPTPADDYNFNLDDNEGVCDLFDVQILNY) is transactivation. Residues 312–329 (DDYNFNLDDNEGVCDLFD) form an RBL2 association region.

This sequence belongs to the E2F/DP family. Component of the DRTF1/E2F transcription factor complex. Binds cooperatively with DP-1 to E2F sites. Interaction with retinoblastoma protein RB1 or proteins RBL1 and RBL2 inhibits the E2F transactivation domain. Component of the DREAM complex (also named LINC complex) at least composed of E2F4, E2F5, LIN9, LIN37, LIN52, LIN54, MYBL1, MYBL2, RBL1, RBL2, RBBP4, TFDP1 and TFDP2. The complex exists in quiescent cells where it represses cell cycle-dependent genes. It dissociates in S phase when LIN9, LIN37, LIN52 and LIN54 form a subcomplex that binds to MYBL2.

Its subcellular location is the nucleus. In terms of biological role, transcriptional activator that binds to E2F sites, these sites are present in the promoter of many genes whose products are involved in cell proliferation. May mediate growth factor-initiated signal transduction. It is likely involved in the early responses of resting cells to growth factor stimulation. Specifically required for multiciliate cell differentiation: together with MCIDAS and E2F5, binds and activate genes required for centriole biogenesis. The sequence is that of Transcription factor E2F5 (E2f5) from Mus musculus (Mouse).